Here is a 150-residue protein sequence, read N- to C-terminus: MLGTALRRCAVAAASRAGSRGLLHPTPVPGPTAAIQSIRCYSHGSHETDEEFDARWVTYFNKPDIDAWELRKGMNTLVGYDLVPEPKIIDAALRACRRLNDFASAVRILEVVKDKAGPHKEIYPYVIQELRPTLNELGISTPEELGLDKV.

A mitochondrion-targeting transit peptide spans 1–41; that stretch reads MLGTALRRCAVAAASRAGSRGLLHPTPVPGPTAAIQSIRCY. Positions 2-17 match the SIFI-degron motif; it reads LGTALRRCAVAAASRA. Lys87 and Lys113 each carry N6-acetyllysine. Phosphothreonine is present on Thr141.

This sequence belongs to the cytochrome c oxidase subunit 5A family. As to quaternary structure, component of the cytochrome c oxidase (complex IV, CIV), a multisubunit enzyme composed of 14 subunits. The complex is composed of a catalytic core of 3 subunits MT-CO1, MT-CO2 and MT-CO3, encoded in the mitochondrial DNA, and 11 supernumerary subunits COX4I, COX5A, COX5B, COX6A, COX6B, COX6C, COX7A, COX7B, COX7C, COX8 and NDUFA4, which are encoded in the nuclear genome. The complex exists as a monomer or a dimer and forms supercomplexes (SCs) in the inner mitochondrial membrane with NADH-ubiquinone oxidoreductase (complex I, CI) and ubiquinol-cytochrome c oxidoreductase (cytochrome b-c1 complex, complex III, CIII), resulting in different assemblies (supercomplex SCI(1)III(2)IV(1) and megacomplex MCI(2)III(2)IV(2)). Interacts with AFG1L. Interacts with RAB5IF. Post-translationally, in response to mitochondrial stress, the precursor protein is ubiquitinated by the SIFI complex in the cytoplasm before mitochondrial import, leading to its degradation. Within the SIFI complex, UBR4 initiates ubiquitin chain that are further elongated or branched by KCMF1.

The protein resides in the mitochondrion inner membrane. Its pathway is energy metabolism; oxidative phosphorylation. Component of the cytochrome c oxidase, the last enzyme in the mitochondrial electron transport chain which drives oxidative phosphorylation. The respiratory chain contains 3 multisubunit complexes succinate dehydrogenase (complex II, CII), ubiquinol-cytochrome c oxidoreductase (cytochrome b-c1 complex, complex III, CIII) and cytochrome c oxidase (complex IV, CIV), that cooperate to transfer electrons derived from NADH and succinate to molecular oxygen, creating an electrochemical gradient over the inner membrane that drives transmembrane transport and the ATP synthase. Cytochrome c oxidase is the component of the respiratory chain that catalyzes the reduction of oxygen to water. Electrons originating from reduced cytochrome c in the intermembrane space (IMS) are transferred via the dinuclear copper A center (CU(A)) of subunit 2 and heme A of subunit 1 to the active site in subunit 1, a binuclear center (BNC) formed by heme A3 and copper B (CU(B)). The BNC reduces molecular oxygen to 2 water molecules using 4 electrons from cytochrome c in the IMS and 4 protons from the mitochondrial matrix. The chain is Cytochrome c oxidase subunit 5A, mitochondrial (COX5A) from Otolemur crassicaudatus (Brown greater galago).